Reading from the N-terminus, the 46-residue chain is Esculentin-1 (46 aa).

Cys40 and Cys46 form a disulfide bridge.

As to expression, expressed by the skin glands.

It localises to the secreted. Antimicrobial peptide. Stimulates insulin release by BRIN-BD11 cells in vitro. The sequence is that of Esculentin-1 from Pelophylax saharicus (Sahara frog).